Reading from the N-terminus, the 121-residue chain is Large ribosomal subunit protein bL12 (121 aa).

It belongs to the bacterial ribosomal protein bL12 family. In terms of assembly, homodimer. Part of the ribosomal stalk of the 50S ribosomal subunit. Forms a multimeric L10(L12)X complex, where L10 forms an elongated spine to which 2 to 4 L12 dimers bind in a sequential fashion. Binds GTP-bound translation factors.

In terms of biological role, forms part of the ribosomal stalk which helps the ribosome interact with GTP-bound translation factors. Is thus essential for accurate translation. This Xanthomonas axonopodis pv. citri (strain 306) protein is Large ribosomal subunit protein bL12.